A 551-amino-acid polypeptide reads, in one-letter code: Colicin E3 (551 aa).

Disordered regions lie at residues 1–74 (MSGG…SGGG), 243–269 (TLSPGVTNNTDKDVRPAGFTQGGNTRD), and 293–320 (PDQVKQRQDEENRRQQEWDATHPVEAAE). A translocation (T) domain region spans residues 1 to 315 (MSGGDGRGHN…RQQEWDATHP (315 aa)). Positions 20-35 (INGGPTGLGVGGGASD) are enriched in gly residues. The short motif at 35-39 (DGSGW) is the Binds to TolB element. A compositionally biased stretch (low complexity) spans 36 to 45 (GSGWSSENNP). The segment covering 46–74 (WGGGSGSGIHWGGGSGHGNGGGNGNSGGG) has biased composition (gly residues). The segment covering 296-320 (VKQRQDEENRRQQEWDATHPVEAAE) has biased composition (basic and acidic residues). The stretch at 316 to 378 (VEAAERNYER…IAEIKQFNRF (63 aa)) forms a coiled coil. Residues 316–450 (VEAAERNYER…SAENNLNDEK (135 aa)) are receptor-binding (R) domain. The short motif at 379–385 (AHDPMAG) is the Hairpin element. The stretch at 386–450 (GHRMWQMAGL…SAENNLNDEK (65 aa)) forms a coiled coil. The interval 406-505 (NKQAAFDAAA…KRWTGDKGRK (100 aa)) is disordered. Basic and acidic residues predominate over residues 430–472 (ESRKKKEDKKRSAENNLNDEKNKPRKGFKDYGHDYHPAPKTEN). The segment at 451 to 456 (NKPRKG) is linker. Residues 455–551 (KGFKDYGHDY…DPKRNIKKYL (97 aa)) form a ribosome inactivating activity region. A cytotoxic RNase (C) domain region spans residues 457-551 (FKDYGHDYHP…DPKRNIKKYL (95 aa)). The active-site Proton donor is His513. Glu517 (proton acceptor) is an active-site residue. Residues 517 to 551 (EGYRASDGQHLGSFDPKTGNQLKGPDPKRNIKKYL) form a disordered region. The segment at 530 to 551 (FDPKTGNQLKGPDPKRNIKKYL) is binding of immunity protein. Residue Arg545 is part of the active site.

This sequence belongs to the cloacin colicin family. As to quaternary structure, native colicin E3 is a 1:1 complex of A chain and protein B (cognate immunity protein, Im3); protein A is 1,000-fold more active in inactivating ribosomes than the native complex. The cytotoxic fragment (residues 456-551, C95) forms a 1:1 complex with Im3. The receptor-binding (R) domain binds obliquely to its receptor BtuB without displacing BtuB's central plug; binding unfolds the R domain. The N-terminal 83 residues (T83) bind OmpF; trimeric complexes with colicin E3, BtuB and OmpF can be cross-linked and immunoprecipitated. Probably inserts into the OmpF pore as an unfolded peptide and spans the OmpF pore. In a complex with T.thermophilus 70S ribosomes, cytotoxic fragment C96 contacts 16S rRNA, 23S rRNA, mRNA, P-site tRNA and ribosomal protein uS12.

The protein resides in the secreted. Colicins are polypeptide toxins produced by and active against E.coli and closely related bacteria. Cleaves 16S rRNA between adenosine-1492 and guanosine-1493 (E.coli 16S rRNA numbering), releasing a 49 nucleotide (nt) 'colicin' fragment. Inactivates 70S ribosomes or 30S subunits by endonucleolytically cleaving 16S RNA at a specific site about 50 nt from its C-terminus. Produces 5'-OH-guanosine and a 2',3'-cyclic phosphate adenosine. Mixing a susceptible (e.g. strain K12 / A19) and colicin E3 producing strain results in total protein translation inhibition within 11 minutes. Its activity is inhibited by cognate immunity protein Im3. Functionally, uses BtuB, the vitamin B transporter, as a receptor on the outer membrane; binds via the receptor (R) domain. Then the translocation domain (T) probably 'fishes' for its outer membrane translocon protein, OmpF. The N-terminal 83 residues (T83) can bind to and occlude OmpF channels. A complex of the cytotoxic C-terminal 96 residues (C96) plus the immunity protein does not occlude OmpF; upon complex separation from the immunity protein C96 becomes disordered and is able to bind OmpF. The N-terminus probably binds TolB and then reinserts into an empty pore of trimeric OmpF; the rest of the protein is pulled through OmpF and crosses the inner membrane, where the cytotoxic fragment is probably released by protease FtsH. The sequence is that of Colicin E3 (ceaC) from Escherichia coli.